A 496-amino-acid chain; its full sequence is uncharacterized protein (496 aa).

The next 12 helical transmembrane spans lie at 33–53 (FLKGLLSAITLLFFILLLIFA), 89–109 (LNFLIVFRFFILSFTLFYTLI), 127–147 (PWFVLYLVIATISFLLFFTFF), 154–174 (VFNLVFLLLVLFLLNLSYEIF), 193–213 (LIIAMVFQALLLLFVIITPLV), 247–267 (IILIAFFFFLITFIVLANTNF), 285–305 (LWFILLLFSAIFIWLLRVFAY), 320–340 (LWVYILQSFFAIIILILYMVF), 355–375 (LLNLVVTQTILSLSLFLVTLF), 382–402 (SLINVFITITVQMSVFGIYIF), 411–431 (LLVLLKVIMILIILTAAIVGF), and 455–475 (VQIMLLLNFSLNFTLISYLTI).

It localises to the cell membrane. This is an uncharacterized protein from Ureaplasma parvum serovar 3 (strain ATCC 700970).